A 301-amino-acid polypeptide reads, in one-letter code: Putative S-adenosyl-L-methionine-dependent methyltransferase Mflv_5024 (301 aa).

S-adenosyl-L-methionine-binding positions include aspartate 129 and 158-159 (DL).

Belongs to the UPF0677 family.

In terms of biological role, exhibits S-adenosyl-L-methionine-dependent methyltransferase activity. The sequence is that of Putative S-adenosyl-L-methionine-dependent methyltransferase Mflv_5024 from Mycolicibacterium gilvum (strain PYR-GCK) (Mycobacterium gilvum (strain PYR-GCK)).